Here is a 445-residue protein sequence, read N- to C-terminus: FAS-associated factor 2 (445 aa).

At A2 the chain carries N-acetylalanine. One can recognise a UBA domain in the interval 12–48 (EQTEKLLQFQDLTGIESMEQCRLALEQHNWNMEAAVQ). N6-acetyllysine is present on K167. The stretch at 275 to 350 (SERLEREERN…EEKERKLECL (76 aa)) forms a coiled coil. The interval 300–361 (SLRADQEKER…PEPSPDDPES (62 aa)) is disordered. Positions 303-348 (ADQEKERKKREEKERKRRKEEEVQQQKLAEERRRQNLQEEKERKLE) are enriched in basic and acidic residues. Positions 357–439 (DDPESVKIIF…GLSHTEVLFV (83 aa)) constitute a UBX domain.

In terms of assembly, identified in a complex that contains SEL1L, OS9, FAF2/UBXD8, UBE2J1/UBC6E and AUP1. Interacts with YOD1. Interacts (via N-terminus) with UBQLN2 (via C-terminus). Interacts with PNPLA2. Interacts with ZFAND2B; probably through VCP. Interacts with LMBR1L and UBAC2.

Its subcellular location is the cytoplasm. The protein localises to the lipid droplet. It is found in the endoplasmic reticulum. In terms of biological role, plays an important role in endoplasmic reticulum-associated degradation (ERAD) that mediates ubiquitin-dependent degradation of misfolded endoplasmic reticulum proteins. By controlling the steady-state expression of the IGF1R receptor, indirectly regulates the insulin-like growth factor receptor signaling pathway. Involved in inhibition of lipid droplet degradation by binding to phospholipase PNPL2 and inhibiting its activity by promoting dissociation of PNPL2 from its endogenous activator, ABHD5 which inhibits the rate of triacylglycerol hydrolysis. Involved in stress granule disassembly: associates with ubiquitinated G3BP1 in response to heat shock, thereby promoting interaction between ubiquitinated G3BP1 and VCP, followed by G3BP1 extraction from stress granules and stress granule disassembly. The polypeptide is FAS-associated factor 2 (Faf2) (Mus musculus (Mouse)).